Reading from the N-terminus, the 312-residue chain is Methionyl-tRNA formyltransferase (312 aa).

A (6S)-5,6,7,8-tetrahydrofolate-binding site is contributed by 109-112 (SLLP).

Belongs to the Fmt family.

It catalyses the reaction L-methionyl-tRNA(fMet) + (6R)-10-formyltetrahydrofolate = N-formyl-L-methionyl-tRNA(fMet) + (6S)-5,6,7,8-tetrahydrofolate + H(+). Functionally, attaches a formyl group to the free amino group of methionyl-tRNA(fMet). The formyl group appears to play a dual role in the initiator identity of N-formylmethionyl-tRNA by promoting its recognition by IF2 and preventing the misappropriation of this tRNA by the elongation apparatus. This Anaeromyxobacter dehalogenans (strain 2CP-1 / ATCC BAA-258) protein is Methionyl-tRNA formyltransferase.